A 128-amino-acid chain; its full sequence is Large ribosomal subunit protein bL19 (128 aa).

The protein belongs to the bacterial ribosomal protein bL19 family.

Its function is as follows. This protein is located at the 30S-50S ribosomal subunit interface and may play a role in the structure and function of the aminoacyl-tRNA binding site. In Mesoplasma florum (strain ATCC 33453 / NBRC 100688 / NCTC 11704 / L1) (Acholeplasma florum), this protein is Large ribosomal subunit protein bL19.